We begin with the raw amino-acid sequence, 126 residues long: Holo-[acyl-carrier-protein] synthase (126 aa).

Mg(2+)-binding residues include Asp9 and Glu58.

It belongs to the P-Pant transferase superfamily. AcpS family. Mg(2+) serves as cofactor.

It is found in the cytoplasm. It carries out the reaction apo-[ACP] + CoA = holo-[ACP] + adenosine 3',5'-bisphosphate + H(+). Functionally, transfers the 4'-phosphopantetheine moiety from coenzyme A to a Ser of acyl-carrier-protein. The chain is Holo-[acyl-carrier-protein] synthase from Pectobacterium carotovorum subsp. carotovorum (strain PC1).